The sequence spans 108 residues: RNA silencing suppressor (108 aa).

The interval 47–50 (RRRR) is basic. The C4-type zinc finger occupies 57–78 (CHRCYRLWPPTVFTTRCDNKYC).

The protein belongs to the carlaviruses nucleic acid-binding protein family.

Functionally, suppressor of viral-induced RNA silencing. The potential mechanism of action is based on sequestering siRNAs. The chain is RNA silencing suppressor from Solanum tuberosum (Potato).